Reading from the N-terminus, the 129-residue chain is Ig kappa chain V-IV region S107B (129 aa).

The first 22 residues, 1 to 22 (MDLQVQIIXFLLISVTVIMSRG), serve as a signal peptide directing secretion. The tract at residues 23–45 (ENVLTQSPAIMAASLGQKVTMTC) is framework-1. A disulfide bridge connects residues C45 and C111. A complementarity-determining-1 region spans residues 46–57 (SASSSVSSSYLH). Residues 58-72 (WYQQKSGASPKPLIH) are framework-2. Residues 73–79 (RTSNLAS) form a complementarity-determining-2 region. Residues 80-111 (GVPARFSGSGSGTSYSLTISSVEAEDDATYYC) are framework-3. The complementarity-determining-3 stretch occupies residues 112-118 (QQWSGYP). The framework-4 stretch occupies residues 119 to 128 (FGSGTKLEIK).

The polypeptide is Ig kappa chain V-IV region S107B (Mus musculus (Mouse)).